A 215-amino-acid chain; its full sequence is N-(5'-phosphoribosyl)anthranilate isomerase (215 aa).

The protein belongs to the TrpF family.

The catalysed reaction is N-(5-phospho-beta-D-ribosyl)anthranilate = 1-(2-carboxyphenylamino)-1-deoxy-D-ribulose 5-phosphate. It functions in the pathway amino-acid biosynthesis; L-tryptophan biosynthesis; L-tryptophan from chorismate: step 3/5. This chain is N-(5'-phosphoribosyl)anthranilate isomerase, found in Pelodictyon phaeoclathratiforme (strain DSM 5477 / BU-1).